We begin with the raw amino-acid sequence, 204 residues long: Recombination protein RecR (204 aa).

The C4-type zinc-finger motif lies at 63–78 (CRICCNVADSELCPIC). Residues 86–181 (NKICVVEQPQ…KVTRLARGLP (96 aa)) enclose the Toprim domain.

The protein belongs to the RecR family.

Functionally, may play a role in DNA repair. It seems to be involved in an RecBC-independent recombinational process of DNA repair. It may act with RecF and RecO. This chain is Recombination protein RecR, found in Dehalococcoides mccartyi (strain ATCC BAA-2100 / JCM 16839 / KCTC 5957 / BAV1).